A 205-amino-acid chain; its full sequence is Small ribosomal subunit protein uS4 (205 aa).

Positions 94–157 (SRLDTVVYRM…KQIPLIQESV (64 aa)) constitute an S4 RNA-binding domain.

This sequence belongs to the universal ribosomal protein uS4 family. In terms of assembly, part of the 30S ribosomal subunit. Contacts protein S5. The interaction surface between S4 and S5 is involved in control of translational fidelity.

Its function is as follows. One of the primary rRNA binding proteins, it binds directly to 16S rRNA where it nucleates assembly of the body of the 30S subunit. In terms of biological role, with S5 and S12 plays an important role in translational accuracy. In Rickettsia felis (strain ATCC VR-1525 / URRWXCal2) (Rickettsia azadi), this protein is Small ribosomal subunit protein uS4.